A 364-amino-acid polypeptide reads, in one-letter code: Metalloendoproteinase 1-MMP (364 aa).

Positions 1-28 (MSRNLIYRRNRALCFVLILFCFPYRFGA) are cleaved as a signal peptide. Positions 29-149 (RNTPEAEQST…NNDFLHTTAH (121 aa)) are cleaved as a propeptide — activation peptide. Asn49 is a glycosylation site (N-linked (GlcNAc...) asparagine). Residues 128–135 (PRCGVSDT) carry the Cysteine switch motif. Cys130 is a Zn(2+) binding site. Asp211 is a binding site for Ca(2+). The Zn(2+) site is built by His221 and Asp223. Ca(2+) is bound by residues Asp228 and Gly229. Residue His236 participates in Zn(2+) binding. Position 243 (Gly243) interacts with Ca(2+). Residue His246 participates in Zn(2+) binding. Residues Asp248 and Glu251 each coordinate Ca(2+). Zn(2+) is bound at residue His275. The active site involves Glu276. Zn(2+) contacts are provided by His279 and His285. Residue Asn338 is glycosylated (N-linked (GlcNAc...) asparagine). The GPI-anchor amidated glycine moiety is linked to residue Gly339. Positions 340–364 (TVSHRFLSGNFIGYVLLVVGLILFL) are cleaved as a propeptide — removed in mature form.

Belongs to the peptidase M10A family. Matrix metalloproteinases (MMPs) subfamily. Ca(2+) serves as cofactor. Zn(2+) is required as a cofactor. Mostly expressed in flowers, roots and stems, and, to a lower extent, in leaves.

The protein localises to the cell membrane. Inhibited by human TIMP-1 and TIMP-2 and by the peptide hydroxamate inhibitor (BB-94). Repressed by acetohydroxamic acid (AHA). Matrix metalloproteinases (MMPs) or matrixins may play a role in the degradation and remodeling of the extracellular matrix (ECM) during development or in response to stresses. Can cleave myelin basic protein as well as fluorigenic peptide substrates, McaPLANvaDpaAR-NH(2) and McaPChaGNvaHADpa-NH(2) 4-fold more efficiently than McaPLGLDpaAR-NH(2) (QF24). Active on myelin basic protein (MBP) and, to some extent, on McaPLGLDpaAR-NH(2) (QF24) and beta-casein. The chain is Metalloendoproteinase 1-MMP from Arabidopsis thaliana (Mouse-ear cress).